The primary structure comprises 360 residues: Photosystem II protein D1 2 (360 aa).

A run of 3 helical transmembrane segments spans residues 29–46 (YIGWFGVIMIPTLLAATI), 118–133 (HFLIGIFCYMGREWEL), and 142–156 (WIPVAFSAPVAAATA). Histidine 118 serves as a coordination point for chlorophyll a. Tyrosine 126 is a pheophytin a binding site. Residues aspartate 170 and glutamate 189 each contribute to the [CaMn4O5] cluster site. The chain crosses the membrane as a helical span at residues 197-218 (FHMLGVAGVFGGALFAAMHGSL). A chlorophyll a-binding site is contributed by histidine 198. Residues histidine 215 and 264-265 (SF) each bind a quinone. Histidine 215 is a Fe cation binding site. Histidine 272 provides a ligand contact to Fe cation. The helical transmembrane segment at 274–288 (FLAAWPVVGIWFAAL) threads the bilayer. [CaMn4O5] cluster-binding residues include histidine 332, glutamate 333, aspartate 342, and alanine 344. Residues 345 to 360 (SGELAPVAMIAPSIEA) constitute a propeptide that is removed on maturation.

This sequence belongs to the reaction center PufL/M/PsbA/D family. PSII is composed of 1 copy each of membrane proteins PsbA, PsbB, PsbC, PsbD, PsbE, PsbF, PsbH, PsbI, PsbJ, PsbK, PsbL, PsbM, PsbT, PsbX, PsbY, PsbZ, Psb30/Ycf12, peripheral proteins PsbO, CyanoQ (PsbQ), PsbU, PsbV and a large number of cofactors. It forms dimeric complexes. The D1/D2 heterodimer binds P680, chlorophylls that are the primary electron donor of PSII, and subsequent electron acceptors. It shares a non-heme iron and each subunit binds pheophytin, quinone, additional chlorophylls, carotenoids and lipids. D1 provides most of the ligands for the Mn4-Ca-O5 cluster of the oxygen-evolving complex (OEC). There is also a Cl(-1) ion associated with D1 and D2, which is required for oxygen evolution. The PSII complex binds additional chlorophylls, carotenoids and specific lipids. serves as cofactor. In terms of processing, tyr-161 forms a radical intermediate that is referred to as redox-active TyrZ, YZ or Y-Z. C-terminally processed by CtpA; processing is essential to allow assembly of the oxygen-evolving complex and thus photosynthetic growth.

The protein localises to the cellular thylakoid membrane. It catalyses the reaction 2 a plastoquinone + 4 hnu + 2 H2O = 2 a plastoquinol + O2. Its function is as follows. Photosystem II (PSII) is a light-driven water:plastoquinone oxidoreductase that uses light energy to abstract electrons from H(2)O, generating O(2) and a proton gradient subsequently used for ATP formation. It consists of a core antenna complex that captures photons, and an electron transfer chain that converts photonic excitation into a charge separation. The D1/D2 (PsbA/PsbD) reaction center heterodimer binds P680, the primary electron donor of PSII as well as several subsequent electron acceptors. The chain is Photosystem II protein D1 2 from Synechococcus elongatus.